A 369-amino-acid polypeptide reads, in one-letter code: Biglycan (369 aa).

Positions 1–16 (MCPLWLLAALLALSQA) are cleaved as a signal peptide. A propeptide spanning residues 17–37 (LPFEQKAFWDFTLDDGLPMLN) is cleaved from the precursor. Residues serine 42 and serine 48 are each glycosylated (O-linked (Xyl...) (glycosaminoglycan) serine). 2 disulfides stabilise this stretch: cysteine 64/cysteine 70 and cysteine 68/cysteine 77. LRR repeat units lie at residues 83–103 (KAVP…NNDI), 104–127 (SELR…NNKI), 128–151 (SKIH…KNHL), 152–172 (VEIP…DNRI), 173–196 (RKVP…GNPL), 197–221 (ENSG…EAKL), 222–242 (TGIP…HNKI), 243–266 (QAIE…HNQI), 267–290 (RMIE…NNKL), 291–313 (SRVP…TNNI), 314–343 (TKVG…NNPV), and 344–369 (PYWE…NYKK). N-linked (GlcNAc...) asparagine glycans are attached at residues asparagine 271 and asparagine 312. An intrachain disulfide couples cysteine 322 to cysteine 355.

It belongs to the small leucine-rich proteoglycan (SLRP) family. SLRP class I subfamily. In terms of assembly, homodimer. Forms a ternary complex with MFAP2 and ELN. In terms of processing, the two attached glycosaminoglycan chains can be either chondroitin sulfate or dermatan sulfate. As to expression, found in several connective tissues, especially in articular cartilages.

Its subcellular location is the secreted. It is found in the extracellular space. It localises to the extracellular matrix. May be involved in collagen fiber assembly. This Ovis aries (Sheep) protein is Biglycan (BGN).